The primary structure comprises 116 residues: Large ribosomal subunit protein uL22 (116 aa).

The protein belongs to the universal ribosomal protein uL22 family. Part of the 50S ribosomal subunit.

Its function is as follows. This protein binds specifically to 23S rRNA; its binding is stimulated by other ribosomal proteins, e.g. L4, L17, and L20. It is important during the early stages of 50S assembly. It makes multiple contacts with different domains of the 23S rRNA in the assembled 50S subunit and ribosome. In terms of biological role, the globular domain of the protein is located near the polypeptide exit tunnel on the outside of the subunit, while an extended beta-hairpin is found that lines the wall of the exit tunnel in the center of the 70S ribosome. This Wolbachia pipientis subsp. Culex pipiens (strain wPip) protein is Large ribosomal subunit protein uL22.